The primary structure comprises 312 residues: Acetyl-coenzyme A carboxylase carboxyl transferase subunit alpha (312 aa).

In terms of domain architecture, CoA carboxyltransferase C-terminal spans Arg36–Thr286.

It belongs to the AccA family. In terms of assembly, acetyl-CoA carboxylase is a heterohexamer composed of biotin carboxyl carrier protein (AccB), biotin carboxylase (AccC) and two subunits each of ACCase subunit alpha (AccA) and ACCase subunit beta (AccD).

Its subcellular location is the cytoplasm. The enzyme catalyses N(6)-carboxybiotinyl-L-lysyl-[protein] + acetyl-CoA = N(6)-biotinyl-L-lysyl-[protein] + malonyl-CoA. It participates in lipid metabolism; malonyl-CoA biosynthesis; malonyl-CoA from acetyl-CoA: step 1/1. Its function is as follows. Component of the acetyl coenzyme A carboxylase (ACC) complex. First, biotin carboxylase catalyzes the carboxylation of biotin on its carrier protein (BCCP) and then the CO(2) group is transferred by the carboxyltransferase to acetyl-CoA to form malonyl-CoA. The sequence is that of Acetyl-coenzyme A carboxylase carboxyl transferase subunit alpha from Helicobacter pylori (strain G27).